We begin with the raw amino-acid sequence, 206 residues long: Thiamine-phosphate synthase (206 aa).

4-amino-2-methyl-5-(diphosphooxymethyl)pyrimidine-binding positions include 33–37 (QMRFK) and Asn65. Positions 66 and 85 each coordinate Mg(2+). Thr104 serves as a coordination point for 4-amino-2-methyl-5-(diphosphooxymethyl)pyrimidine. 2-[(2R,5Z)-2-carboxy-4-methylthiazol-5(2H)-ylidene]ethyl phosphate is bound at residue 130 to 132 (TAT). Lys133 contributes to the 4-amino-2-methyl-5-(diphosphooxymethyl)pyrimidine binding site. 2-[(2R,5Z)-2-carboxy-4-methylthiazol-5(2H)-ylidene]ethyl phosphate is bound at residue Gly166.

It belongs to the thiamine-phosphate synthase family. Mg(2+) is required as a cofactor.

The enzyme catalyses 2-[(2R,5Z)-2-carboxy-4-methylthiazol-5(2H)-ylidene]ethyl phosphate + 4-amino-2-methyl-5-(diphosphooxymethyl)pyrimidine + 2 H(+) = thiamine phosphate + CO2 + diphosphate. It catalyses the reaction 2-(2-carboxy-4-methylthiazol-5-yl)ethyl phosphate + 4-amino-2-methyl-5-(diphosphooxymethyl)pyrimidine + 2 H(+) = thiamine phosphate + CO2 + diphosphate. The catalysed reaction is 4-methyl-5-(2-phosphooxyethyl)-thiazole + 4-amino-2-methyl-5-(diphosphooxymethyl)pyrimidine + H(+) = thiamine phosphate + diphosphate. Its pathway is cofactor biosynthesis; thiamine diphosphate biosynthesis; thiamine phosphate from 4-amino-2-methyl-5-diphosphomethylpyrimidine and 4-methyl-5-(2-phosphoethyl)-thiazole: step 1/1. Functionally, condenses 4-methyl-5-(beta-hydroxyethyl)thiazole monophosphate (THZ-P) and 2-methyl-4-amino-5-hydroxymethyl pyrimidine pyrophosphate (HMP-PP) to form thiamine monophosphate (TMP). In Flavobacterium psychrophilum (strain ATCC 49511 / DSM 21280 / CIP 103535 / JIP02/86), this protein is Thiamine-phosphate synthase.